A 193-amino-acid polypeptide reads, in one-letter code: Peptidyl-tRNA hydrolase (193 aa).

His17 contacts tRNA. His22 (proton acceptor) is an active-site residue. Residues Phe68, Asn70, and Asn116 each contribute to the tRNA site.

This sequence belongs to the PTH family. Monomer.

The protein resides in the cytoplasm. The enzyme catalyses an N-acyl-L-alpha-aminoacyl-tRNA + H2O = an N-acyl-L-amino acid + a tRNA + H(+). In terms of biological role, hydrolyzes ribosome-free peptidyl-tRNAs (with 1 or more amino acids incorporated), which drop off the ribosome during protein synthesis, or as a result of ribosome stalling. Its function is as follows. Catalyzes the release of premature peptidyl moieties from peptidyl-tRNA molecules trapped in stalled 50S ribosomal subunits, and thus maintains levels of free tRNAs and 50S ribosomes. The protein is Peptidyl-tRNA hydrolase of Xanthomonas campestris pv. campestris (strain ATCC 33913 / DSM 3586 / NCPPB 528 / LMG 568 / P 25).